The following is a 320-amino-acid chain: Glyoxylate/hydroxypyruvate reductase B (320 aa).

Active-site residues include Arg233 and Glu262. The Proton donor role is filled by His281.

This sequence belongs to the D-isomer specific 2-hydroxyacid dehydrogenase family. GhrB subfamily. As to quaternary structure, homodimer.

It is found in the cytoplasm. The catalysed reaction is glycolate + NADP(+) = glyoxylate + NADPH + H(+). It catalyses the reaction (R)-glycerate + NAD(+) = 3-hydroxypyruvate + NADH + H(+). It carries out the reaction (R)-glycerate + NADP(+) = 3-hydroxypyruvate + NADPH + H(+). In terms of biological role, catalyzes the NADPH-dependent reduction of glyoxylate and hydroxypyruvate into glycolate and glycerate, respectively. This is Glyoxylate/hydroxypyruvate reductase B from Pectobacterium atrosepticum (strain SCRI 1043 / ATCC BAA-672) (Erwinia carotovora subsp. atroseptica).